A 360-amino-acid chain; its full sequence is Phospho-N-acetylmuramoyl-pentapeptide-transferase (360 aa).

Over 1 to 25 the chain is Periplasmic; the sequence is MLVWLAEHLVKYYSGFNVFSYLTFR. The chain crosses the membrane as a helical span at residues 26–46; that stretch reads AIVSLLTALFISLWMGPRMIA. Residues 47-71 are Cytoplasmic-facing; sequence HLQKLSFGQVVRNDGPESHFSKRGT. A helical membrane pass occupies residues 72–92; it reads PTMGGIMILTAIVISVLLWAY. Position 93 (P93) is a topological domain, periplasmic. A helical transmembrane segment spans residues 94-114; sequence SNPYVWCVLVVLVGYGVIGFV. Over 115–131 the chain is Cytoplasmic; that stretch reads DDYRKVVRKDTKGLIAR. A helical membrane pass occupies residues 132-152; the sequence is WKYFWMSVIALGVAFALYLVG. The Periplasmic portion of the chain corresponds to 153–167; that stretch reads KDTPATQLVVPFFKD. A helical membrane pass occupies residues 168–188; sequence VMPQLGLFYILLAYFVIVGTG. Residues 189–198 lie on the Cytoplasmic side of the membrane; that stretch reads NAVNLTDGLD. A helical membrane pass occupies residues 199 to 219; the sequence is GLAIMPTVFVAGGFALVAWAT. Over 220–235 the chain is Periplasmic; it reads GNMNFASYLHIPYLRH. Residues 236-256 traverse the membrane as a helical segment; the sequence is AGELVIVCTAIVGAGLGFLWF. The Cytoplasmic portion of the chain corresponds to 257 to 262; that stretch reads NTYPAQ. A helical transmembrane segment spans residues 263 to 283; that stretch reads VFMGDVGSLALGGALGIIAVL. Residues 284 to 287 lie on the Periplasmic side of the membrane; it reads LRQE. Residues 288-308 traverse the membrane as a helical segment; the sequence is FLLVIMGGVFVVETLSVILQV. Topologically, residues 309–337 are cytoplasmic; sequence GSFKLRGQRIFRMAPIHHHYELKGWPEPR. Residues 338 to 358 form a helical membrane-spanning segment; sequence VIVRFWIISLMLVLIGLATLK. At 359-360 the chain is on the periplasmic side; it reads VR.

The protein belongs to the glycosyltransferase 4 family. MraY subfamily. Mg(2+) is required as a cofactor.

It localises to the cell inner membrane. The catalysed reaction is UDP-N-acetyl-alpha-D-muramoyl-L-alanyl-gamma-D-glutamyl-meso-2,6-diaminopimeloyl-D-alanyl-D-alanine + di-trans,octa-cis-undecaprenyl phosphate = di-trans,octa-cis-undecaprenyl diphospho-N-acetyl-alpha-D-muramoyl-L-alanyl-D-glutamyl-meso-2,6-diaminopimeloyl-D-alanyl-D-alanine + UMP. The protein operates within cell wall biogenesis; peptidoglycan biosynthesis. Functionally, catalyzes the initial step of the lipid cycle reactions in the biosynthesis of the cell wall peptidoglycan: transfers peptidoglycan precursor phospho-MurNAc-pentapeptide from UDP-MurNAc-pentapeptide onto the lipid carrier undecaprenyl phosphate, yielding undecaprenyl-pyrophosphoryl-MurNAc-pentapeptide, known as lipid I. The protein is Phospho-N-acetylmuramoyl-pentapeptide-transferase of Escherichia coli O157:H7.